We begin with the raw amino-acid sequence, 382 residues long: Pentraxin-related protein PTX3 (382 aa).

A signal peptide spans 1-17; that stretch reads MHISVILFCALWSAVSA. Positions 79–137 form a coiled coil; that stretch reads VMLRGELQKLQAELGRLEGSLQKLCGPEAPSETRLARALDDLLQASRDAGRRLARLEDA. Disulfide bonds link C180-C358 and C211-C272. The Pentraxin (PTX) domain maps to 180–382; it reads CETAILFPMR…QPHGGAQYVY (203 aa). A glycan (N-linked (GlcNAc...) asparagine) is linked at N221.

In terms of assembly, homooctamer; disulfide-linked. Binds to C1q.

It localises to the secreted. Plays a role in the regulation of innate resistance to pathogens, inflammatory reactions, possibly clearance of self-components and female fertility. The polypeptide is Pentraxin-related protein PTX3 (PTX3) (Bos taurus (Bovine)).